A 392-amino-acid polypeptide reads, in one-letter code: Phosphoglycerate kinase (392 aa).

Residues 21-23 (DMN), Arg-36, 59-62 (HLGR), Arg-114, and Arg-147 contribute to the substrate site. ATP is bound by residues Lys-198, Glu-320, and 346–349 (GGDT).

Belongs to the phosphoglycerate kinase family. In terms of assembly, monomer.

It localises to the cytoplasm. It carries out the reaction (2R)-3-phosphoglycerate + ATP = (2R)-3-phospho-glyceroyl phosphate + ADP. It participates in carbohydrate degradation; glycolysis; pyruvate from D-glyceraldehyde 3-phosphate: step 2/5. This chain is Phosphoglycerate kinase, found in Neisseria meningitidis serogroup A / serotype 4A (strain DSM 15465 / Z2491).